A 171-amino-acid chain; its full sequence is MHQVISATTNPAKIQAILQAFEEIFGEGSCHITPVAVESGVPEQPFGSEETRAGARNRVDNAQRLHPQADFWVAIEAGIDDDATFSWVVIDNGVQRGEARSATLPLPAVILDRVRQGEALGPVMSHYTGIDEIGRKEGAIGVFTAGKLTRSSVYYQAVILALSPFHNAVYR.

A substrate-binding site is contributed by 8-13; it reads TTNPAK. Glu-38 and Gln-68 together coordinate Mg(2+).

Belongs to the YjjX NTPase family. As to quaternary structure, homodimer. Mg(2+) serves as cofactor. The cofactor is Mn(2+).

It catalyses the reaction XTP + H2O = XDP + phosphate + H(+). It carries out the reaction ITP + H2O = IDP + phosphate + H(+). Functionally, phosphatase that hydrolyzes non-canonical purine nucleotides such as XTP and ITP to their respective diphosphate derivatives. Probably excludes non-canonical purines from DNA/RNA precursor pool, thus preventing their incorporation into DNA/RNA and avoiding chromosomal lesions. In Salmonella choleraesuis (strain SC-B67), this protein is Inosine/xanthosine triphosphatase (yjjX).